The chain runs to 153 residues: Putative WASP homolog-associated protein with actin, membranes and microtubules-like protein 1 (153 aa).

The stretch at 113 to 151 (AIQFYEIQLELYEVKFEILKNKEILLTTQLDSLERLIKD) forms a coiled coil.

This chain is Putative WASP homolog-associated protein with actin, membranes and microtubules-like protein 1 (WHAMMP3), found in Homo sapiens (Human).